Consider the following 281-residue polypeptide: Bis(5'-nucleosyl)-tetraphosphatase, symmetrical (281 aa).

Belongs to the Ap4A hydrolase family.

It catalyses the reaction P(1),P(4)-bis(5'-adenosyl) tetraphosphate + H2O = 2 ADP + 2 H(+). Its function is as follows. Hydrolyzes diadenosine 5',5'''-P1,P4-tetraphosphate to yield ADP. The chain is Bis(5'-nucleosyl)-tetraphosphatase, symmetrical from Pectobacterium carotovorum subsp. carotovorum (strain PC1).